The sequence spans 200 residues: Potassium-transporting ATPase KdpC subunit (200 aa).

A helical membrane pass occupies residues 6-26 (PAVVLLILLTLITGIAYPLLT).

This sequence belongs to the KdpC family. In terms of assembly, the system is composed of three essential subunits: KdpA, KdpB and KdpC.

It localises to the cell inner membrane. Its function is as follows. Part of the high-affinity ATP-driven potassium transport (or Kdp) system, which catalyzes the hydrolysis of ATP coupled with the electrogenic transport of potassium into the cytoplasm. This subunit acts as a catalytic chaperone that increases the ATP-binding affinity of the ATP-hydrolyzing subunit KdpB by the formation of a transient KdpB/KdpC/ATP ternary complex. This chain is Potassium-transporting ATPase KdpC subunit, found in Yersinia enterocolitica serotype O:8 / biotype 1B (strain NCTC 13174 / 8081).